The following is a 295-amino-acid chain: Glycine--tRNA ligase alpha subunit (295 aa).

The protein belongs to the class-II aminoacyl-tRNA synthetase family. In terms of assembly, tetramer of two alpha and two beta subunits.

Its subcellular location is the cytoplasm. It catalyses the reaction tRNA(Gly) + glycine + ATP = glycyl-tRNA(Gly) + AMP + diphosphate. In Rhodospirillum rubrum (strain ATCC 11170 / ATH 1.1.1 / DSM 467 / LMG 4362 / NCIMB 8255 / S1), this protein is Glycine--tRNA ligase alpha subunit.